We begin with the raw amino-acid sequence, 359 residues long: 3-dehydroquinate synthase (359 aa).

NAD(+)-binding positions include 71 to 76, 105 to 109, 129 to 130, Lys-142, and Lys-151; these read DGEAYK, GVVGD, and TT. Residues Glu-184, His-247, and His-264 each coordinate Zn(2+).

This sequence belongs to the sugar phosphate cyclases superfamily. Dehydroquinate synthase family. Requires Co(2+) as cofactor. Zn(2+) serves as cofactor. The cofactor is NAD(+).

It is found in the cytoplasm. The enzyme catalyses 7-phospho-2-dehydro-3-deoxy-D-arabino-heptonate = 3-dehydroquinate + phosphate. Its pathway is metabolic intermediate biosynthesis; chorismate biosynthesis; chorismate from D-erythrose 4-phosphate and phosphoenolpyruvate: step 2/7. Functionally, catalyzes the conversion of 3-deoxy-D-arabino-heptulosonate 7-phosphate (DAHP) to dehydroquinate (DHQ). The sequence is that of 3-dehydroquinate synthase from Burkholderia lata (strain ATCC 17760 / DSM 23089 / LMG 22485 / NCIMB 9086 / R18194 / 383).